We begin with the raw amino-acid sequence, 361 residues long: uncharacterized protein (361 aa).

33 to 40 (GPINSGKT) serves as a coordination point for ATP.

It belongs to the archaeal ATPase family.

This is an uncharacterized protein from Methanocaldococcus jannaschii (strain ATCC 43067 / DSM 2661 / JAL-1 / JCM 10045 / NBRC 100440) (Methanococcus jannaschii).